The sequence spans 550 residues: Glucose-6-phosphate isomerase (550 aa).

Glutamate 356 serves as the catalytic Proton donor. Catalysis depends on residues histidine 387 and lysine 515.

This sequence belongs to the GPI family.

The protein resides in the cytoplasm. The catalysed reaction is alpha-D-glucose 6-phosphate = beta-D-fructose 6-phosphate. It functions in the pathway carbohydrate biosynthesis; gluconeogenesis. The protein operates within carbohydrate degradation; glycolysis; D-glyceraldehyde 3-phosphate and glycerone phosphate from D-glucose: step 2/4. Functionally, catalyzes the reversible isomerization of glucose-6-phosphate to fructose-6-phosphate. This chain is Glucose-6-phosphate isomerase, found in Vibrio cholerae serotype O1 (strain ATCC 39541 / Classical Ogawa 395 / O395).